The sequence spans 484 residues: UDP-N-acetylmuramoyl-L-alanyl-D-glutamate--2,6-diaminopimelate ligase (484 aa).

Serine 29 is a binding site for UDP-N-acetyl-alpha-D-muramoyl-L-alanyl-D-glutamate. An ATP-binding site is contributed by 108–114 (GTSGKTS). UDP-N-acetyl-alpha-D-muramoyl-L-alanyl-D-glutamate is bound by residues 150-151 (TT), serine 177, glutamine 183, and arginine 185. Lysine 217 bears the N6-carboxylysine mark. Residues arginine 381, 405–408 (DNPR), glycine 453, and glutamate 457 each bind meso-2,6-diaminopimelate. The Meso-diaminopimelate recognition motif signature appears at 405–408 (DNPR).

It belongs to the MurCDEF family. MurE subfamily. Requires Mg(2+) as cofactor. Carboxylation is probably crucial for Mg(2+) binding and, consequently, for the gamma-phosphate positioning of ATP.

It localises to the cytoplasm. It carries out the reaction UDP-N-acetyl-alpha-D-muramoyl-L-alanyl-D-glutamate + meso-2,6-diaminopimelate + ATP = UDP-N-acetyl-alpha-D-muramoyl-L-alanyl-gamma-D-glutamyl-meso-2,6-diaminopimelate + ADP + phosphate + H(+). The protein operates within cell wall biogenesis; peptidoglycan biosynthesis. Catalyzes the addition of meso-diaminopimelic acid to the nucleotide precursor UDP-N-acetylmuramoyl-L-alanyl-D-glutamate (UMAG) in the biosynthesis of bacterial cell-wall peptidoglycan. The sequence is that of UDP-N-acetylmuramoyl-L-alanyl-D-glutamate--2,6-diaminopimelate ligase from Mesorhizobium japonicum (strain LMG 29417 / CECT 9101 / MAFF 303099) (Mesorhizobium loti (strain MAFF 303099)).